The primary structure comprises 281 residues: Cell division protein DivIB (281 aa).

Positions 1–36 are disordered; the sequence is MARKRITRRDPEEELSKFLRHEPGQGQETRKLSSQL. The Cytoplasmic segment spans residues 1-46; it reads MARKRITRRDPEEELSKFLRHEPGQGQETRKLSSQLTSLKKERRRG. Positions 8–31 are enriched in basic and acidic residues; that stretch reads RRDPEEELSKFLRHEPGQGQETRK. A helical membrane pass occupies residues 47–69; the sequence is LLTRLGSIMAVCLLAIAFLTYYV. Residues 70–281 lie on the Extracellular side of the membrane; sequence SPLADVSTVR…SAEKKAYGLS (212 aa). Positions 73–144 constitute a POTRA domain; the sequence is ADVSTVRVLG…NTLNMQVHER (72 aa).

Belongs to the FtsQ/DivIB family. DivIB subfamily.

It localises to the cell membrane. Cell division protein that may be involved in stabilizing or promoting the assembly of the division complex. The chain is Cell division protein DivIB from Lactobacillus delbrueckii subsp. bulgaricus (strain ATCC 11842 / DSM 20081 / BCRC 10696 / JCM 1002 / NBRC 13953 / NCIMB 11778 / NCTC 12712 / WDCM 00102 / Lb 14).